Reading from the N-terminus, the 244-residue chain is Monothiol glutaredoxin-4 (244 aa).

Residues 2 to 106 enclose the Thioredoxin domain; it reads SVEITFVEQF…LKAAIDEYIQ (105 aa). The Glutaredoxin domain occupies 147–244; it reads NERLSTLTNA…NGELQEMLPN (98 aa). Residue lysine 164 participates in glutathione binding. Cysteine 172 contacts [2Fe-2S] cluster. Residues 201–205 and 226–227 each bind glutathione; these read RQGLK and LD.

Belongs to the glutaredoxin family. Monothiol subfamily. As to quaternary structure, homodimer. Interacts with php4.

The protein resides in the cytoplasm. It is found in the nucleus. Functionally, monothiol glutaredoxin involved in the biogenesis of iron-sulfur clusters. Binds one iron-sulfur cluster per dimer. The iron-sulfur cluster is bound between subunits, and is complexed by a bound glutathione and a cysteine residue from each subunit. The polypeptide is Monothiol glutaredoxin-4 (grx4) (Schizosaccharomyces pombe (strain 972 / ATCC 24843) (Fission yeast)).